Here is a 368-residue protein sequence, read N- to C-terminus: Zinc finger protein 24 (368 aa).

Lys-22 participates in a covalent cross-link: Glycyl lysine isopeptide (Lys-Gly) (interchain with G-Cter in SUMO2). A Glycyl lysine isopeptide (Lys-Gly) (interchain with G-Cter in SUMO1); alternate cross-link involves residue Lys-27. Lys-27 is covalently cross-linked (Glycyl lysine isopeptide (Lys-Gly) (interchain with G-Cter in SUMO2); alternate). One can recognise an SCAN box domain in the interval 52–134 (RQRFRQFGYQ…TVLEDLESEL (83 aa)). A phosphoserine mark is found at Ser-132 and Ser-142. Residues Lys-147, Lys-177, and Lys-236 each participate in a glycyl lysine isopeptide (Lys-Gly) (interchain with G-Cter in SUMO2) cross-link. The segment at 251-273 (HICDECGKHFSQGSALILHQRIH) adopts a C2H2-type 1 zinc-finger fold. Residues 251 to 301 (HICDECGKHFSQGSALILHQRIHSGEKPYGCVECGKAFSRSSILVQHQRVH) form a necessary and sufficient for nuclear localization region. Residue Ser-274 is modified to Phosphoserine. Glycyl lysine isopeptide (Lys-Gly) (interchain with G-Cter in SUMO2) cross-links involve residues Lys-277 and Lys-286. 3 C2H2-type zinc fingers span residues 279 to 301 (YGCV…QRVH), 307 to 329 (YKCL…QRIH), and 335 to 357 (YECV…XXRH). Ser-292 bears the Phosphoserine mark. Position 335 is a phosphotyrosine (Tyr-335). Residues Lys-361 and Lys-367 each participate in a glycyl lysine isopeptide (Lys-Gly) (interchain with G-Cter in SUMO2) cross-link.

It belongs to the krueppel C2H2-type zinc-finger protein family. Post-translationally, sumoylated.

The protein resides in the nucleus. Its function is as follows. Transcription factor required for myelination of differentiated oligodendrocytes. Required for the conversion of oligodendrocytes from the premyelinating to the myelinating state. In the developing central nervous system (CNS), involved in the maintenance in the progenitor stage by promoting the cell cycle. Specifically binds to the 5'-TCAT-3' DNA sequence. Has transcription repressor activity in vitro. This is Zinc finger protein 24 (ZNF24) from Pan troglodytes (Chimpanzee).